We begin with the raw amino-acid sequence, 343 residues long: Glycerol-3-phosphate dehydrogenase [NAD(P)+] (343 aa).

NADPH-binding residues include Ser-11, Trp-12, His-32, Arg-33, and Lys-106. Sn-glycerol 3-phosphate is bound by residues Lys-106, Gly-136, and Ser-138. Ala-140 contributes to the NADPH binding site. Lys-192, Asp-245, Ser-255, Arg-256, and Asn-257 together coordinate sn-glycerol 3-phosphate. Lys-192 functions as the Proton acceptor in the catalytic mechanism. Arg-256 is an NADPH binding site. NADPH is bound by residues Val-280 and Glu-282.

Belongs to the NAD-dependent glycerol-3-phosphate dehydrogenase family.

Its subcellular location is the cytoplasm. It catalyses the reaction sn-glycerol 3-phosphate + NAD(+) = dihydroxyacetone phosphate + NADH + H(+). The enzyme catalyses sn-glycerol 3-phosphate + NADP(+) = dihydroxyacetone phosphate + NADPH + H(+). It participates in membrane lipid metabolism; glycerophospholipid metabolism. Its function is as follows. Catalyzes the reduction of the glycolytic intermediate dihydroxyacetone phosphate (DHAP) to sn-glycerol 3-phosphate (G3P), the key precursor for phospholipid synthesis. In Geobacillus thermodenitrificans (strain NG80-2), this protein is Glycerol-3-phosphate dehydrogenase [NAD(P)+].